Reading from the N-terminus, the 1398-residue chain is MDSKDTQKLLKEHRIPCIDVGWLVRPSASTSKSSRPGKSESKANSVAPDIQMDTARPPVFETSVDSSSSILSSNDKGRRHSVAASLLMDNQRANAGSTSVPTNIPPPRGRSKSVVETNLSNVEADSGHHHHHRHHHHTEDAPAPKKVGFFKSLFGHRKKDQEQQEKERERKERSPSPTHVDRGAAIRRERTATISAESPPPLQYNAPPSYNDTVVPLTRSKTESEVYYENHPQSYYHGRMRTYHSPEEGKVDGTSPADDHNYGGSRPDPRLMDFLRYYKSKDYKLAAFKEGNFIKSSASPTTKKNRRASFSLHNDKPQPAKSLAHQKFDAKGRPIPPHPDAPKLPSAFRKKHPSNASIVDTVDSNSDVSSSAQNNNQTPSSHKFGAFLRKVTSYGNNNNNSTNASSLSANVNNPDTSSTSLWSSSSMEFDPSKITTVPGLENIRPLKHVSFATNTYFNDPPQQICSKNPRKGEVEVKPNGSVVIHRLTPQERKKIMESTSLGVVVGGTGQLKLLNPEEDDANAKSKEEMAPQKQNEVEAHDEEDNNSQRRNIVMAAAEAAAEARAKEAPNELKRIVTNNEEEVTVSKTASHLTIDKPMISRRGASTSSLASMVSSDTNGTNADDEGEILPPPSLKIPHDIVYTRCCHLREILPIPATLKQLKKGSTDPIPILQLRNPRPSMVEIWSFSDFLSIAPVLCLSLDGVQLTVQMLRIILSSLVYKQHFQKLSLRNTPLDEEGWKVLCYFVSKAKSLHSIDLTMVPSIKTNVQKPSKSSLKSKILRMQCNLENRSDMNWDLLTASIALMGGLEEIVISGAKMNSAQFKNFILVACIATERLGLAYNGLSKSQCDDLAKWMVQSKVTGLDVGFNDLNGKLSSFTDAVLGKIQKANEKNVFKFLSLNGTNLRVNEHDTFENNEVLKLISVLCYLENLKFLDISNNPAIFPHCVPTLIDFLPVFVNLVRLHIDYNNLSSTSVVMLAEILPMCSRLNYFSMLGTELDLASSKALAEAVRKSSSLMTLDVDYVYMPENIKEKISLYALRNIQGELKRVNSDDKDIKDSQFSSLQDQLSLLLTEKADNSEHYNKMVENFMAKIALARIKISKVVHDLFDLKLNGQLNLEGKEALIRLCFIEASLERGCDLLKQRHNNTLKSPEAVSKSRKGGNQAQPNSESCQRMLLSSSILQNSDHIALMPFGSAIVEKSSPDAEDAVEFREGDDSNVNHEDVPANDQQFRDEVDIKNKYSIIKRELEHEKLVGGGDLPVDKEILNRAAQSLDSDQIKEFLLKNDVSTILGVIDELHSQGYHLHHIFKKQGNQEETAFRTKDEQQSSQSNDSSANASPTTDPISTGSNTSRTNDNAHIPPTDAPGFDKFMNNAEENAIDAAYDDVLDKIQDARNSSTK.

M1 is subject to N-acetylmethionine. Positions 21–77 (GWLVRPSASTSKSSRPGKSESKANSVAPDIQMDTARPPVFETSVDSSSSILSSNDKG) are disordered. Residues 27–36 (SASTSKSSRP) show a composition bias toward polar residues. The span at 63–73 (SVDSSSSILSS) shows a compositional bias: low complexity. S81 is modified (phosphoserine). Disordered stretches follow at residues 90–144 (NQRA…APAP), 156–186 (HRKK…GAAI), and 191–210 (TATI…PPSY). Polar residues-rich tracts occupy residues 91–102 (QRANAGSTSVPT) and 114–123 (VVETNLSNVE). Over residues 159–186 (KDQEQQEKERERKERSPSPTHVDRGAAI) the composition is skewed to basic and acidic residues. K221 participates in a covalent cross-link: Glycyl lysine isopeptide (Lys-Gly) (interchain with G-Cter in ubiquitin). T222 is subject to Phosphothreonine. Disordered regions lie at residues 244-270 (HSPE…PDPR), 296-382 (SSAS…PSSH), 395-428 (GNNN…SSME), and 515-548 (NPEE…NNSQ). Phosphoserine is present on residues S309, S311, S354, and S357. Low complexity predominate over residues 357–371 (SIVDTVDSNSDVSSS). Over residues 372-381 (AQNNNQTPSS) the composition is skewed to polar residues. Residues 396-426 (NNNNNSTNASSLSANVNNPDTSSTSLWSSSS) are compositionally biased toward low complexity. The segment covering 521–538 (ANAKSKEEMAPQKQNEVE) has biased composition (basic and acidic residues). T577 is modified (phosphothreonine). Residues 605-615 (STSSLASMVSS) show a composition bias toward low complexity. Disordered regions lie at residues 605-630 (STSS…EILP), 1148-1169 (LKSP…PNSE), and 1203-1223 (DAED…HEDV). The span at 1160 to 1169 (GGNQAQPNSE) shows a compositional bias: polar residues. Positions 1208-1223 (VEFREGDDSNVNHEDV) are enriched in basic and acidic residues. Residues 1227-1258 (DQQFRDEVDIKNKYSIIKRELEHEKLVGGGDL) form a tau/MAP repeat-like region. Residues 1313–1372 (QEETAFRTKDEQQSSQSNDSSANASPTTDPISTGSNTSRTNDNAHIPPTDAPGFDKFMNN) form a disordered region. The span at 1325–1337 (QSSQSNDSSANAS) shows a compositional bias: low complexity. Over residues 1338-1355 (PTTDPISTGSNTSRTNDN) the composition is skewed to polar residues.

The protein localises to the cytoplasm. It is found in the cytoskeleton. The protein resides in the spindle. Its function is as follows. Essential for the formation and/or stabilization of microtubules. Binds to microtubules in vitro. The polypeptide is MAP-homologous protein 1 (MHP1) (Saccharomyces cerevisiae (strain ATCC 204508 / S288c) (Baker's yeast)).